Consider the following 359-residue polypeptide: Photosystem II protein D1 1 (359 aa).

3 helical membrane-spanning segments follow: residues 29 to 46 (YVGWFGVLMIPTLLAATT), 118 to 133 (HFLIGIYAYMGREWEL), and 142 to 156 (WICIAYSAPVAAASA). Residue His118 participates in chlorophyll a binding. Tyr126 serves as a coordination point for pheophytin a. Residues Asp170 and Glu189 each coordinate [CaMn4O5] cluster. A helical membrane pass occupies residues 197–218 (FHMLGVAGVFGGSLFSAMHGSL). His198 contributes to the chlorophyll a binding site. A quinone is bound by residues His215 and 264 to 265 (SF). His215 contacts Fe cation. Fe cation is bound at residue His272. The helical transmembrane segment at 274 to 288 (FLAAWPVVGIWFTAL) threads the bilayer. Residues His332, Glu333, Asp342, and Ala344 each contribute to the [CaMn4O5] cluster site. The propeptide occupies 345–359 (AAESAPVALQAPAIG).

It belongs to the reaction center PufL/M/PsbA/D family. PSII is composed of 1 copy each of membrane proteins PsbA, PsbB, PsbC, PsbD, PsbE, PsbF, PsbH, PsbI, PsbJ, PsbK, PsbL, PsbM, PsbT, PsbX, PsbY, PsbZ, Psb30/Ycf12, peripheral proteins PsbO, CyanoQ (PsbQ), PsbU, PsbV and a large number of cofactors. It forms dimeric complexes. The cofactor is The D1/D2 heterodimer binds P680, chlorophylls that are the primary electron donor of PSII, and subsequent electron acceptors. It shares a non-heme iron and each subunit binds pheophytin, quinone, additional chlorophylls, carotenoids and lipids. D1 provides most of the ligands for the Mn4-Ca-O5 cluster of the oxygen-evolving complex (OEC). There is also a Cl(-1) ion associated with D1 and D2, which is required for oxygen evolution. The PSII complex binds additional chlorophylls, carotenoids and specific lipids.. Tyr-161 forms a radical intermediate that is referred to as redox-active TyrZ, YZ or Y-Z. In terms of processing, C-terminally processed by CtpA; processing is essential to allow assembly of the oxygen-evolving complex and thus photosynthetic growth.

The protein resides in the cellular thylakoid membrane. The enzyme catalyses 2 a plastoquinone + 4 hnu + 2 H2O = 2 a plastoquinol + O2. In terms of biological role, photosystem II (PSII) is a light-driven water:plastoquinone oxidoreductase that uses light energy to abstract electrons from H(2)O, generating O(2) and a proton gradient subsequently used for ATP formation. It consists of a core antenna complex that captures photons, and an electron transfer chain that converts photonic excitation into a charge separation. The D1/D2 (PsbA/PsbD) reaction center heterodimer binds P680, the primary electron donor of PSII as well as several subsequent electron acceptors. The protein is Photosystem II protein D1 1 of Synechococcus sp. (strain RCC307).